We begin with the raw amino-acid sequence, 541 residues long: uncharacterized protein (541 aa).

Helical transmembrane passes span 10–32 (LNNQ…KINI), 39–57 (SSAI…YTLP), 62–84 (TLGL…FFSL), 91–113 (LSLG…TYLF), and 146–168 (APAA…IQII). RCK C-terminal domains follow at residues 183 to 260 (LNKE…DDLE) and 268 to 352 (TPVD…IFGN). A run of 6 helical transmembrane segments spans residues 357-375 (SYNF…GFIL), 385-407 (SGIF…SNIY), 428-447 (GLVL…ILAT), 452-474 (GLQL…VFIC), 481-500 (PFLS…PGLA), and 515-537 (YATV…IFIV).

This sequence belongs to the AAE transporter (TC 2.A.81) family.

The protein resides in the cell membrane. This is an uncharacterized protein from Desulfotalea psychrophila (strain LSv54 / DSM 12343).